A 232-amino-acid chain; its full sequence is Putative uridine kinase DAS2 (232 aa).

17 to 24 (GGHATGVG) provides a ligand contact to ATP.

The protein belongs to the uridine kinase family.

The protein resides in the cytoplasm. Its subcellular location is the nucleus. It carries out the reaction uridine + ATP = UMP + ADP + H(+). It catalyses the reaction cytidine + ATP = CMP + ADP + H(+). It participates in pyrimidine metabolism; CTP biosynthesis via salvage pathway; CTP from cytidine: step 1/3. It functions in the pathway pyrimidine metabolism; UMP biosynthesis via salvage pathway; UMP from uridine: step 1/1. Putative uridine kinase identified in a screen for mutants with increased levels of rDNA transcription. The sequence is that of Putative uridine kinase DAS2 (DAS2) from Saccharomyces cerevisiae (strain ATCC 204508 / S288c) (Baker's yeast).